Here is a 348-residue protein sequence, read N- to C-terminus: Dihydroorotase (348 aa).

Histidine 14 and histidine 16 together coordinate Zn(2+). Residues 16-18 (HLR) and asparagine 42 each bind substrate. Zn(2+) is bound by residues lysine 100, histidine 137, and histidine 175. The residue at position 100 (lysine 100) is an N6-carboxylysine. A substrate-binding site is contributed by histidine 137. Leucine 220 serves as a coordination point for substrate. Aspartate 248 contributes to the Zn(2+) binding site. Residue aspartate 248 is part of the active site. Positions 252 and 264 each coordinate substrate.

Belongs to the metallo-dependent hydrolases superfamily. DHOase family. Class II DHOase subfamily. As to quaternary structure, homodimer. The cofactor is Zn(2+).

It carries out the reaction (S)-dihydroorotate + H2O = N-carbamoyl-L-aspartate + H(+). Its pathway is pyrimidine metabolism; UMP biosynthesis via de novo pathway; (S)-dihydroorotate from bicarbonate: step 3/3. Functionally, catalyzes the reversible cyclization of carbamoyl aspartate to dihydroorotate. This Ectopseudomonas mendocina (strain ymp) (Pseudomonas mendocina) protein is Dihydroorotase.